A 359-amino-acid polypeptide reads, in one-letter code: Lachesin (359 aa).

Positions 1-25 (MWRPSISNCVWSTLLLAIFVQQTLA) are cleaved as a signal peptide. Positions 29-130 (PTISYITQEQ…HKVSAEVKLS (102 aa)) constitute an Ig-like V-type domain. C50 and C113 form a disulfide bridge. N-linked (GlcNAc...) asparagine glycosylation is found at N92 and N140. 2 consecutive Ig-like C2-type domains span residues 135 to 221 (PVIS…INVE) and 226 to 317 (PVIT…ARVN). 2 disulfides stabilise this stretch: C157–C204 and C247–C303. Residue A336 is the site of GPI-anchor amidated alanine attachment. Positions 337–359 (GAEDVSATSFALVGILAALLFAR) are cleaved as a propeptide — removed in mature form.

In terms of tissue distribution, expressed on differentiating neuronal cells from the onset of neurogenesis in both the central and peripheral nervous systems. First detected in the cellularized blastoderm, apart from in the ventral side. Expression persists uniformly in the early ectoderm until the end of gastrulation. From stage 10, expressed in an alternating strong/weak pattern in each segment until stage 15 when it disappears. From stage 11, expressed in subsets of neurons and later subsets of glial cells. From early stage 13, strongly expressed in trachea, hindgut, foregut and the nervous system.

The protein localises to the cell membrane. Its function is as follows. Required for normal tracheal development and maintenance of the trans-epithelial diffusion barrier. Functions as a homophilic cell-adhesion molecule. May play a role in early neuronal differentiation and axon outgrowth. This Drosophila melanogaster (Fruit fly) protein is Lachesin (Lac).